We begin with the raw amino-acid sequence, 446 residues long: Probable polyamine aminopropyl transferase (446 aa).

The segment at 1–117 (MVEPAIGRNH…KRIACVVSAV (117 aa)) is unknown. Positions 64–94 (GRGAERWHRSPRQANGRFSNQRYSSTSPNSS) are disordered. Residues 75–94 (RQANGRFSNQRYSSTSPNSS) show a composition bias toward polar residues. The PABS domain occupies 116–351 (AVIFVATSCV…ELFAKKPGSG (236 aa)). Residues 118 to 353 (IFVATSCVSP…FAKKPGSGSE (236 aa)) are spermidine synthase. S-methyl-5'-thioadenosine-binding positions include Asn147, Glu226, and 251 to 252 (DG). Asp269 acts as the Proton acceptor in catalysis.

The protein belongs to the spermidine/spermine synthase family. As to quaternary structure, homodimer or homotetramer.

It localises to the cytoplasm. It carries out the reaction S-adenosyl 3-(methylsulfanyl)propylamine + putrescine = S-methyl-5'-thioadenosine + spermidine + H(+). It participates in amine and polyamine biosynthesis; spermidine biosynthesis; spermidine from putrescine: step 1/1. Functionally, catalyzes the irreversible transfer of a propylamine group from the amino donor S-adenosylmethioninamine (decarboxy-AdoMet) to putrescine (1,4-diaminobutane) to yield spermidine. The chain is Probable polyamine aminopropyl transferase (speE) from Bifidobacterium longum (strain NCC 2705).